Reading from the N-terminus, the 285-residue chain is ATP synthase gamma chain (285 aa).

It belongs to the ATPase gamma chain family. F-type ATPases have 2 components, CF(1) - the catalytic core - and CF(0) - the membrane proton channel. CF(1) has five subunits: alpha(3), beta(3), gamma(1), delta(1), epsilon(1). CF(0) has three main subunits: a, b and c.

The protein resides in the cell membrane. Produces ATP from ADP in the presence of a proton gradient across the membrane. The gamma chain is believed to be important in regulating ATPase activity and the flow of protons through the CF(0) complex. The sequence is that of ATP synthase gamma chain from Exiguobacterium sp. (strain ATCC BAA-1283 / AT1b).